A 140-amino-acid chain; its full sequence is L-fucose mutarotase (140 aa).

His22 functions as the Proton donor in the catalytic mechanism. Substrate-binding positions include Asp30, Arg107, and 129–131; that span reads YGN.

It belongs to the RbsD / FucU family. FucU mutarotase subfamily. Homodecamer.

Its subcellular location is the cytoplasm. It catalyses the reaction alpha-L-fucose = beta-L-fucose. It participates in carbohydrate metabolism; L-fucose metabolism. Its function is as follows. Involved in the anomeric conversion of L-fucose. The chain is L-fucose mutarotase from Salmonella paratyphi B (strain ATCC BAA-1250 / SPB7).